We begin with the raw amino-acid sequence, 520 residues long: MPATPPMPGYDAVAVPVLDSTLGNTDIMTRISLTFPTQLSLALLQDSWYELVRAWPILAARVRHTPSTPSGLSFLIPQPDKVKELEQRSRTSHKDQEKHIVIVDASSRSIASFHPITAKAIQSSLSRDTVSVGAAPDNADSLKMTCSNATTSLKQLLRADQAYITAHATVWSDATTIALAFSHIAGDAFSVKAIFEAWRQTIESAAPAPLQGVGVDPFITYLPPHGKNSKSEDTDKQGERDVGLPLGFFQYGFIDKVRLAWNLISDIKIKRPEKKFGQYYMYMPEEKVQALMAQARADVDALVSASDDSEKQALDTRISTFNVLLAWLLQNIHAANPKRKRMSTVMTIVNAKTRPPARHDPSDYPPHQLWGGALGVPLEPLASGDYASLPLGQLALHIRTSLTAQIDPANMQANIVTLLRHTRWAKPSGKLIFFARPNHYLSGCTEWRSTRFGELDFGAAASPPSSVKPVAIGTDMEIAVSKRNRWVIFGDMGGGVWFSGFMTDHEATHRDGFGRYQHVQ.

Residues H183 and D456 each act as proton acceptor in the active site.

Belongs to the plant acyltransferase family.

Its pathway is secondary metabolite biosynthesis. Acyl-CoA-dependent acyltransferase; part of the gene cluster that mediates the biosynthesis of mannosylerythritol lipids (MELs), surface-active substances that enhance the availability of water-insoluble substrates. Depending on the number of acetyl groups, mannosylerythritol lipids can be differentiated into MEL A (fully acetylated), MEL B and MEL C (monoacetylated at R-6 and R-4, respectively), and the fully deacetylated MEL D. The first step in the pathway is the generation of mannosylerythritol by the glycosyltransferase EMT1 which catalyzes the transfer of GDP-mannose to the C-4 atom of meso-erythritol. This reaction has to be stereospecific, since only mannosyl-D-erythritol is generated. The produced disaccharide is subsequently acylated with fatty acids of various lengths by the acyltransferases MAC1 and MAC2 at positions C-2 and C-3, repectively. The existence of MEL derivatives which carry an acetyl group at C-2 implies that at least MAC1 also accepts acetyl-CoA as a donor. The final step of MEL biosynthesis is the acetylation of the fully acylated mannosylerythritol lipids catalyzed by the acetyl-CoA-dependent acetyltransferase MAT1. MAT1 displays a relaxed regioselectivity and is able to transfer acetylgroups to both positions C-4 and C-6 of the mannosyl moiety. This chain is Acetyltransferase MAT1, found in Pseudozyma antarctica (strain T-34) (Yeast).